Reading from the N-terminus, the 96-residue chain is Co-chaperonin GroES (96 aa).

The protein belongs to the GroES chaperonin family. Heptamer of 7 subunits arranged in a ring. Interacts with the chaperonin GroEL.

The protein resides in the cytoplasm. Functionally, together with the chaperonin GroEL, plays an essential role in assisting protein folding. The GroEL-GroES system forms a nano-cage that allows encapsulation of the non-native substrate proteins and provides a physical environment optimized to promote and accelerate protein folding. GroES binds to the apical surface of the GroEL ring, thereby capping the opening of the GroEL channel. The chain is Co-chaperonin GroES from Actinobacillus succinogenes (strain ATCC 55618 / DSM 22257 / CCUG 43843 / 130Z).